Reading from the N-terminus, the 190-residue chain is uncharacterized protein (190 aa).

Positions 1 to 15 are cleaved as a signal peptide; sequence MKVFAYIALATVVAG.

Its subcellular location is the secreted. This is an uncharacterized protein from Arthroderma benhamiae (strain ATCC MYA-4681 / CBS 112371) (Trichophyton mentagrophytes).